Reading from the N-terminus, the 298-residue chain is Exosome complex component Rrp4 (298 aa).

The S1 motif domain occupies 63–131; it reads GDVVIGKIKD…EVKKVKLGLK (69 aa). Residues 139–197 form the KH domain; that stretch reads RGGIIVDITPTKVPRLIGKKGSMINMIKDKTNCKIIVGQNGLVWVKGEEDMEQLTKDII. Residues 276 to 298 are disordered; the sequence is KNKKDKPLSYGNNSGNSYILNNR. Positions 285–298 are enriched in polar residues; the sequence is YGNNSGNSYILNNR.

Belongs to the RRP4 family. As to quaternary structure, component of the archaeal exosome complex. Forms a trimer of Rrp4 and/or Csl4 subunits. The trimer associates with a hexameric ring-like arrangement composed of 3 Rrp41-Rrp42 heterodimers.

It localises to the cytoplasm. Non-catalytic component of the exosome, which is a complex involved in RNA degradation. Increases the RNA binding and the efficiency of RNA degradation. Confers strong poly(A) specificity to the exosome. The protein is Exosome complex component Rrp4 of Methanobrevibacter smithii (strain ATCC 35061 / DSM 861 / OCM 144 / PS).